The chain runs to 1071 residues: ATP-dependent helicase/deoxyribonuclease subunit B (1071 aa).

The protein belongs to the helicase family. AddB/RexB type 2 subfamily. Heterodimer of AddA and RexB. Mg(2+) serves as cofactor.

The heterodimer acts as both an ATP-dependent DNA helicase and an ATP-dependent, dual-direction single-stranded exonuclease. Recognizes the chi site generating a DNA molecule suitable for the initiation of homologous recombination. This subunit has 5' -&gt; 3' nuclease activity but not helicase activity. This Streptococcus pyogenes serotype M28 (strain MGAS6180) protein is ATP-dependent helicase/deoxyribonuclease subunit B.